The primary structure comprises 352 residues: Anthranilate phosphoribosyltransferase (352 aa).

Residues glycine 91, 94 to 95 (GD), threonine 99, 101 to 104 (NIST), 119 to 127 (KHGNRASSS), and serine 131 each bind 5-phospho-alpha-D-ribose 1-diphosphate. Glycine 91 contributes to the anthranilate binding site. Residue serine 103 participates in Mg(2+) binding. Residue asparagine 122 participates in anthranilate binding. Position 177 (arginine 177) interacts with anthranilate. Positions 235 and 236 each coordinate Mg(2+).

The protein belongs to the anthranilate phosphoribosyltransferase family. In terms of assembly, homodimer. Mg(2+) is required as a cofactor.

The enzyme catalyses N-(5-phospho-beta-D-ribosyl)anthranilate + diphosphate = 5-phospho-alpha-D-ribose 1-diphosphate + anthranilate. It functions in the pathway amino-acid biosynthesis; L-tryptophan biosynthesis; L-tryptophan from chorismate: step 2/5. In terms of biological role, catalyzes the transfer of the phosphoribosyl group of 5-phosphorylribose-1-pyrophosphate (PRPP) to anthranilate to yield N-(5'-phosphoribosyl)-anthranilate (PRA). In Arthrobacter sp. (strain FB24), this protein is Anthranilate phosphoribosyltransferase.